A 104-amino-acid polypeptide reads, in one-letter code: Urease subunit gamma (104 aa).

It belongs to the urease gamma subunit family. As to quaternary structure, heterotrimer of UreA (gamma), UreB (beta) and UreC (alpha) subunits. Three heterotrimers associate to form the active enzyme.

It localises to the cytoplasm. It catalyses the reaction urea + 2 H2O + H(+) = hydrogencarbonate + 2 NH4(+). It functions in the pathway nitrogen metabolism; urea degradation; CO(2) and NH(3) from urea (urease route): step 1/1. The protein is Urease subunit gamma of Actinomyces naeslundii.